Consider the following 261-residue polypeptide: Imidazole glycerol phosphate synthase subunit HisF (261 aa).

Active-site residues include Asp11 and Asp130.

The protein belongs to the HisA/HisF family. Heterodimer of HisH and HisF.

Its subcellular location is the cytoplasm. It catalyses the reaction 5-[(5-phospho-1-deoxy-D-ribulos-1-ylimino)methylamino]-1-(5-phospho-beta-D-ribosyl)imidazole-4-carboxamide + L-glutamine = D-erythro-1-(imidazol-4-yl)glycerol 3-phosphate + 5-amino-1-(5-phospho-beta-D-ribosyl)imidazole-4-carboxamide + L-glutamate + H(+). The protein operates within amino-acid biosynthesis; L-histidine biosynthesis; L-histidine from 5-phospho-alpha-D-ribose 1-diphosphate: step 5/9. Its function is as follows. IGPS catalyzes the conversion of PRFAR and glutamine to IGP, AICAR and glutamate. The HisF subunit catalyzes the cyclization activity that produces IGP and AICAR from PRFAR using the ammonia provided by the HisH subunit. This chain is Imidazole glycerol phosphate synthase subunit HisF, found in Limosilactobacillus fermentum (strain NBRC 3956 / LMG 18251) (Lactobacillus fermentum).